Here is a 159-residue protein sequence, read N- to C-terminus: 2-C-methyl-D-erythritol 2,4-cyclodiphosphate synthase (159 aa).

Residues Asp-8 and His-10 each coordinate a divalent metal cation. Residues 8-10 and 34-35 each bind 4-CDP-2-C-methyl-D-erythritol 2-phosphate; these read DSH and HS. His-42 lines the a divalent metal cation pocket. 4-CDP-2-C-methyl-D-erythritol 2-phosphate contacts are provided by residues 56–58, 61–65, Phe-139, and Arg-142; these read DIG and FPDSD.

The protein belongs to the IspF family. In terms of assembly, homotrimer. The cofactor is a divalent metal cation.

The catalysed reaction is 4-CDP-2-C-methyl-D-erythritol 2-phosphate = 2-C-methyl-D-erythritol 2,4-cyclic diphosphate + CMP. It participates in isoprenoid biosynthesis; isopentenyl diphosphate biosynthesis via DXP pathway; isopentenyl diphosphate from 1-deoxy-D-xylulose 5-phosphate: step 4/6. Its function is as follows. Involved in the biosynthesis of isopentenyl diphosphate (IPP) and dimethylallyl diphosphate (DMAPP), two major building blocks of isoprenoid compounds. Catalyzes the conversion of 4-diphosphocytidyl-2-C-methyl-D-erythritol 2-phosphate (CDP-ME2P) to 2-C-methyl-D-erythritol 2,4-cyclodiphosphate (ME-CPP) with a corresponding release of cytidine 5-monophosphate (CMP). This Syntrophus aciditrophicus (strain SB) protein is 2-C-methyl-D-erythritol 2,4-cyclodiphosphate synthase.